The chain runs to 136 residues: Phospholipase A2 (136 aa).

Ca(2+)-binding residues include tryptophan 8, glycine 10, and glycine 12. Disulfide bonds link cysteine 9/cysteine 31, cysteine 30/cysteine 70, cysteine 37/cysteine 63, cysteine 61/cysteine 95, and cysteine 105/cysteine 115. Asparagine 16 carries N-linked (GlcNAc...) asparagine glycosylation. Histidine 34 is a catalytic residue. Aspartate 35 contributes to the Ca(2+) binding site. Aspartate 64 is a catalytic residue.

This sequence belongs to the phospholipase A2 family. Requires Ca(2+) as cofactor. As to expression, expressed by the venom gland.

The protein resides in the secreted. It carries out the reaction a 1,2-diacyl-sn-glycero-3-phosphocholine + H2O = a 1-acyl-sn-glycero-3-phosphocholine + a fatty acid + H(+). In terms of biological role, PLA2 catalyzes the calcium-dependent hydrolysis of the 2-acyl groups in 3-sn-phosphoglycerides. The sequence is that of Phospholipase A2 from Bombus pensylvanicus (American bumblebee).